The primary structure comprises 375 residues: MQCAQYTASRCRSCQWLDKPYPQQLADKQNHLENLLSDHRVTQWLSPLFGQESAFRNKAKMVVSGSVERPLLGMLHRDGTPVDLCECPLYPTSFAPVFAVLKTFIARAGLTPYNVARKRGELKFLLLTESTYSGELMLRFVLRSQTKLSQLQAALPWLQQQLPQLAVISVNIQPVHMAILEGEQEMPLTEQQALPEIFNQVPLFIRPQSFFQTNPQVAASLYATARQWVRELKIDSMWDLFCGVGGFGLHCADTETRLTGIEISAEAIACARQSADQLGLKNVTFAALDSTQFATAETQVPQLVLVNPPRRGIGAQLCEYLSQMAPQFILYSSCNAETMAKDISLLADYRIERVQLFDMFPHTAHYEVLSLLIKC.

[4Fe-4S] cluster contacts are provided by C3, C11, C14, and C87. S-adenosyl-L-methionine is bound by residues Q212, F241, E262, and N307. The active-site Nucleophile is C334.

It belongs to the class I-like SAM-binding methyltransferase superfamily. RNA M5U methyltransferase family. RlmC subfamily.

The enzyme catalyses uridine(747) in 23S rRNA + S-adenosyl-L-methionine = 5-methyluridine(747) in 23S rRNA + S-adenosyl-L-homocysteine + H(+). Functionally, catalyzes the formation of 5-methyl-uridine at position 747 (m5U747) in 23S rRNA. This Yersinia enterocolitica serotype O:8 / biotype 1B (strain NCTC 13174 / 8081) protein is 23S rRNA (uracil(747)-C(5))-methyltransferase RlmC.